Here is a 504-residue protein sequence, read N- to C-terminus: Arabinose import ATP-binding protein AraG (504 aa).

ABC transporter domains are found at residues Leu8–Arg243 and Tyr256–Val499. Gly40–Ser47 contributes to the ATP binding site.

The protein belongs to the ABC transporter superfamily. Arabinose importer (TC 3.A.1.2.2) family. In terms of assembly, the complex is composed of two ATP-binding proteins (AraG), two transmembrane proteins (AraH) and a solute-binding protein (AraF).

The protein resides in the cell inner membrane. It carries out the reaction L-arabinose(out) + ATP + H2O = L-arabinose(in) + ADP + phosphate + H(+). Its function is as follows. Part of the ABC transporter complex AraFGH involved in arabinose import. Responsible for energy coupling to the transport system. This Shigella dysenteriae serotype 1 (strain Sd197) protein is Arabinose import ATP-binding protein AraG.